Consider the following 95-residue polypeptide: Co-chaperonin GroES (95 aa).

This sequence belongs to the GroES chaperonin family. In terms of assembly, heptamer of 7 subunits arranged in a ring. Interacts with the chaperonin GroEL.

Its subcellular location is the cytoplasm. Together with the chaperonin GroEL, plays an essential role in assisting protein folding. The GroEL-GroES system forms a nano-cage that allows encapsulation of the non-native substrate proteins and provides a physical environment optimized to promote and accelerate protein folding. GroES binds to the apical surface of the GroEL ring, thereby capping the opening of the GroEL channel. This chain is Co-chaperonin GroES, found in Streptococcus equi subsp. equi (strain 4047).